Reading from the N-terminus, the 190-residue chain is Ribose 1,5-bisphosphate phosphokinase PhnN (190 aa).

11-18 (GPSGSGKD) lines the ATP pocket.

The protein belongs to the ribose 1,5-bisphosphokinase family.

The enzyme catalyses alpha-D-ribose 1,5-bisphosphate + ATP = 5-phospho-alpha-D-ribose 1-diphosphate + ADP. Its pathway is metabolic intermediate biosynthesis; 5-phospho-alpha-D-ribose 1-diphosphate biosynthesis; 5-phospho-alpha-D-ribose 1-diphosphate from D-ribose 5-phosphate (route II): step 3/3. Catalyzes the phosphorylation of ribose 1,5-bisphosphate to 5-phospho-D-ribosyl alpha-1-diphosphate (PRPP). This Thiobacillus denitrificans (strain ATCC 25259 / T1) protein is Ribose 1,5-bisphosphate phosphokinase PhnN.